We begin with the raw amino-acid sequence, 177 residues long: Large ribosomal subunit protein uL6 (177 aa).

It belongs to the universal ribosomal protein uL6 family. As to quaternary structure, part of the 50S ribosomal subunit.

Its function is as follows. This protein binds to the 23S rRNA, and is important in its secondary structure. It is located near the subunit interface in the base of the L7/L12 stalk, and near the tRNA binding site of the peptidyltransferase center. The sequence is that of Large ribosomal subunit protein uL6 from Brucella anthropi (strain ATCC 49188 / DSM 6882 / CCUG 24695 / JCM 21032 / LMG 3331 / NBRC 15819 / NCTC 12168 / Alc 37) (Ochrobactrum anthropi).